Consider the following 209-residue polypeptide: MARYKESACRLCRREGLKLFLKGDRCYGEKCAFERRGYAPGEHGQLRRKQPSDYGVQLREKQKLKRMYGLLEKQFRGYFEKADKKKGITGTNLLLYLERRLDNMVYRLGFANSRNEARQLVRHNHFLVNGRKVNIPSFLVNIGDFIEVTEEGRKNNKIIEAMETIVRRGIPQWLELEQENFKGKVKMLPTREELTMPIQEQLVVELYSK.

Positions 99 to 162 (RRLDNMVYRL…RKNNKIIEAM (64 aa)) constitute an S4 RNA-binding domain.

It belongs to the universal ribosomal protein uS4 family. In terms of assembly, part of the 30S ribosomal subunit. Contacts protein S5. The interaction surface between S4 and S5 is involved in control of translational fidelity.

Functionally, one of the primary rRNA binding proteins, it binds directly to 16S rRNA where it nucleates assembly of the body of the 30S subunit. In terms of biological role, with S5 and S12 plays an important role in translational accuracy. This chain is Small ribosomal subunit protein uS4, found in Syntrophus aciditrophicus (strain SB).